Here is a 475-residue protein sequence, read N- to C-terminus: Ribulose bisphosphate carboxylase large chain (475 aa).

A propeptide spanning residues 1–2 (MS) is cleaved from the precursor. Pro-3 bears the N-acetylproline mark. N6,N6,N6-trimethyllysine is present on Lys-14. Asn-123 and Thr-173 together coordinate substrate. Lys-175 (proton acceptor) is an active-site residue. Lys-177 is a binding site for substrate. Lys-201, Asp-203, and Glu-204 together coordinate Mg(2+). The residue at position 201 (Lys-201) is an N6-carboxylysine. The active-site Proton acceptor is His-294. Substrate contacts are provided by Arg-295, His-327, and Ser-379.

It belongs to the RuBisCO large chain family. Type I subfamily. Heterohexadecamer of 8 large chains and 8 small chains. Mg(2+) serves as cofactor.

Its subcellular location is the plastid. The protein localises to the chloroplast. It catalyses the reaction 2 (2R)-3-phosphoglycerate + 2 H(+) = D-ribulose 1,5-bisphosphate + CO2 + H2O. The enzyme catalyses D-ribulose 1,5-bisphosphate + O2 = 2-phosphoglycolate + (2R)-3-phosphoglycerate + 2 H(+). Its function is as follows. RuBisCO catalyzes two reactions: the carboxylation of D-ribulose 1,5-bisphosphate, the primary event in carbon dioxide fixation, as well as the oxidative fragmentation of the pentose substrate in the photorespiration process. Both reactions occur simultaneously and in competition at the same active site. This chain is Ribulose bisphosphate carboxylase large chain, found in Chlorella vulgaris (Green alga).